We begin with the raw amino-acid sequence, 110 residues long: Large ribosomal subunit protein uL22 (110 aa).

Belongs to the universal ribosomal protein uL22 family. Part of the 50S ribosomal subunit.

Functionally, this protein binds specifically to 23S rRNA; its binding is stimulated by other ribosomal proteins, e.g. L4, L17, and L20. It is important during the early stages of 50S assembly. It makes multiple contacts with different domains of the 23S rRNA in the assembled 50S subunit and ribosome. In terms of biological role, the globular domain of the protein is located near the polypeptide exit tunnel on the outside of the subunit, while an extended beta-hairpin is found that lines the wall of the exit tunnel in the center of the 70S ribosome. The polypeptide is Large ribosomal subunit protein uL22 (Exiguobacterium sibiricum (strain DSM 17290 / CCUG 55495 / CIP 109462 / JCM 13490 / 255-15)).